Reading from the N-terminus, the 399-residue chain is Phosphoglycerate kinase (399 aa).

Substrate is bound by residues 24-26, Arg-39, 62-65, Arg-121, and Arg-154; these read DYN and HLGR. ATP-binding positions include Lys-204, Gly-295, Glu-326, and 355-358; that span reads GGDS.

It belongs to the phosphoglycerate kinase family. As to quaternary structure, monomer.

It localises to the cytoplasm. The enzyme catalyses (2R)-3-phosphoglycerate + ATP = (2R)-3-phospho-glyceroyl phosphate + ADP. Its pathway is carbohydrate degradation; glycolysis; pyruvate from D-glyceraldehyde 3-phosphate: step 2/5. The sequence is that of Phosphoglycerate kinase from Elusimicrobium minutum (strain Pei191).